The following is a 1107-amino-acid chain: DNA-directed RNA polymerase subunit beta (1107 aa).

Residues 1062–1075 (DNEGNEKEKARELG) are compositionally biased toward basic and acidic residues. Residues 1062-1081 (DNEGNEKEKARELGLDLPDN) form a disordered region.

The protein belongs to the RNA polymerase beta chain family. In terms of assembly, the RNAP catalytic core consists of 2 alpha, 1 beta, 1 beta' and 1 omega subunit. When a sigma factor is associated with the core the holoenzyme is formed, which can initiate transcription.

The enzyme catalyses RNA(n) + a ribonucleoside 5'-triphosphate = RNA(n+1) + diphosphate. Functionally, DNA-dependent RNA polymerase catalyzes the transcription of DNA into RNA using the four ribonucleoside triphosphates as substrates. The polypeptide is DNA-directed RNA polymerase subunit beta (Syntrophomonas wolfei subsp. wolfei (strain DSM 2245B / Goettingen)).